The following is a 493-amino-acid chain: Occludin (493 aa).

Residues 1–47 (MYSRPSNYAPSKDVYGGEMRSQPAYSYYPEEEIQHFYRWSSPPGIIK) lie on the Cytoplasmic side of the membrane. Residues 41-250 (SPPGIIKIMS…IIFFAVKTRK (210 aa)) enclose the MARVEL domain. The helical transmembrane segment at 48–70 (IMSILIVVMCVGIFACVASTLPW) threads the bilayer. Over 71-116 (DLDITGQSMGYGMGSGSYSGGYTGYGFGGSQMGLGFAYGGNYTDPR) the chain is Extracellular. A helical membrane pass occupies residues 117-141 (AAKGFILAMAAFCFIIGLVIFVMLV). The Cytoplasmic segment spans residues 142–151 (TRTPLSTSRK). A helical transmembrane segment spans residues 152-176 (FYLIVIIVSAIIGGLVFIATIVYTV). Residues 177-224 (GVNPVAQASGSAFYTQIVSICNQFYSPVQTGVFVNQYLYHYCVVEPQE) lie on the Extracellular side of the membrane. C197 and C218 are disulfide-bonded. Residues 225–246 (AIAIVLGFLIVVAFAIIIFFAV) traverse the membrane as a helical segment. Residues 247–493 (KTRKKINQYG…IKQMVSNYDK (247 aa)) are Cytoplasmic-facing. The tract at residues 334–407 (YGMSPRHYSS…TKQRQEYKQE (74 aa)) is disordered. Over residues 352–361 (APPKKRPGKP) the composition is skewed to basic residues. A Phosphothreonine; by CK2; in vitro modification is found at T375. A Phosphoserine; by CK2; in vitro modification is found at S379. Residues 379 to 389 (SADELEDDSWD) are compositionally biased toward acidic residues. Residues 386 to 493 (DSWDSEYPPI…IKQMVSNYDK (108 aa)) form the OCEL domain. Positions 396–428 (TQTKQRQEYKQEFASDLHEYKRLQAELDELSKI) form a coiled coil.

It belongs to the ELL/occludin family. As to quaternary structure, interacts in vitro with cingulin, possibly directly. Interacts with ZO-1. In terms of processing, phosphorylated. As to expression, localized at tight junctions of both epithelial and endothelial cells.

It is found in the cell membrane. The protein resides in the cell junction. It localises to the tight junction. In terms of biological role, probably plays a role in the formation and regulation of the tight junction (TJ) paracellular permeability barrier. In Xenopus laevis (African clawed frog), this protein is Occludin (ocln).